The following is a 286-amino-acid chain: Zinc finger protein ZAT5 (286 aa).

3 disordered regions span residues 1–28, 40–60, and 131–171; these read MMMG…RSSS, STSS…EYNS, and GGHR…FKVS. Residues 115-137 form a C2H2-type 1 zinc finger; sequence YECKTCNRTFSSFQALGGHRASH. The span at 154–171 shows a compositional bias: polar residues; the sequence is QPKSSASEEGQNSHFKVS. Residues 190-212 form a C2H2-type 2 zinc finger; that stretch reads HECSICGSEFTSGQALGGHMRRH.

In terms of tissue distribution, expressed in flowers and siliques.

Its subcellular location is the nucleus. Its function is as follows. Probable transcription factor that may be involved in stress responses. The chain is Zinc finger protein ZAT5 (ZAT5) from Arabidopsis thaliana (Mouse-ear cress).